The chain runs to 40 residues: Allophycocyanin alpha-B chain (40 aa).

It belongs to the phycobiliprotein family. As to quaternary structure, heterodimer of an alpha and a beta chain. Contains one covalently linked bilin chromophore.

Its subcellular location is the cellular thylakoid membrane. Light-harvesting photosynthetic bile pigment-protein from the phycobiliprotein complex. Allophycocyanin has a maximum absorption at approximately 650 nanometers. The chain is Allophycocyanin alpha-B chain from Mastigocladus laminosus (Fischerella sp.).